Here is a 460-residue protein sequence, read N- to C-terminus: Muscarinic acetylcholine receptor M1 (460 aa).

Over 1 to 22 (MNTSAPPAVSPNITVLAPGKGP) the chain is Extracellular. N-linked (GlcNAc...) asparagine glycosylation is found at Asn2 and Asn12. The chain crosses the membrane as a helical span at residues 23 to 48 (WQVAFIGITTGLLSLATVTGNLLVLI). Residues 49–62 (SFKVNTELKTVNNY) are Cytoplasmic-facing. The helical transmembrane segment at 63 to 84 (FLLSLACADLIIGTFSMNLYTT) threads the bilayer. Residues 85 to 95 (YLLMGHWALGT) are Extracellular-facing. A helical membrane pass occupies residues 96 to 121 (LACDLWLALDYVASNASVMNLLLISF). Residues Cys98 and Cys178 are joined by a disulfide bond. Residues 122-142 (DRYFSVTRPLSYRAKRTPRRA) lie on the Cytoplasmic side of the membrane. The helical transmembrane segment at 143–164 (ALMIGLAWLVSFVLWAPAILFW) threads the bilayer. The Extracellular segment spans residues 165 to 185 (QYLVGERTVLAGQCYIQFLSQ). Residues 186–209 (PIITFGTAMAAFYLPVTVMCTLYW) form a helical membrane-spanning segment. Topologically, residues 210-366 (RIYRETENRA…LVKEKKAART (157 aa)) are cytoplasmic. Disordered regions lie at residues 225 to 256 (LQGS…ETPP), 274 to 296 (WKEE…GEEP), and 310 to 351 (EAQA…QLAK). Thr230 is subject to Phosphothreonine. Over residues 238 to 247 (SSSSERSQPG) the composition is skewed to low complexity. Residues 328–343 (RPTRKGRERAGKGQKP) show a composition bias toward basic residues. Residues 367-390 (LSAILLAFIVTWTPYNIMVLVSTF) form a helical membrane-spanning segment. At 391–397 (CKDCVPE) the chain is on the extracellular side. Residues 398–420 (TLWELGYWLCYVNSTINPMCYAL) traverse the membrane as a helical segment. At 421-460 (CNKAFRDTFRLLLLCRWDKRRWRKIPKRPGSVHRTPSRQC) the chain is on the cytoplasmic side. Thr428 bears the Phosphothreonine mark. Ser451 bears the Phosphoserine mark. Thr455 carries the post-translational modification Phosphothreonine. Ser457 is subject to Phosphoserine.

The protein belongs to the G-protein coupled receptor 1 family. Muscarinic acetylcholine receptor subfamily. CHRM1 sub-subfamily. In terms of assembly, interacts with GPRASP2. Interacts with TMEM147.

It is found in the cell membrane. The protein resides in the postsynaptic cell membrane. Its function is as follows. The muscarinic acetylcholine receptor mediates various cellular responses, including inhibition of adenylate cyclase, breakdown of phosphoinositides and modulation of potassium channels through the action of G proteins. Primary transducing effect is Pi turnover. The polypeptide is Muscarinic acetylcholine receptor M1 (CHRM1) (Sus scrofa (Pig)).